A 197-amino-acid chain; its full sequence is Putative carbonic anhydrase YvdA (197 aa).

Positions 41, 43, 99, and 102 each coordinate Zn(2+).

The protein belongs to the beta-class carbonic anhydrase family. It depends on Zn(2+) as a cofactor.

The catalysed reaction is hydrogencarbonate + H(+) = CO2 + H2O. In terms of biological role, reversible hydration of carbon dioxide. The polypeptide is Putative carbonic anhydrase YvdA (yvdA) (Bacillus subtilis (strain 168)).